Reading from the N-terminus, the 856-residue chain is DNA mismatch repair protein MutS (856 aa).

607–614 (GPNMSGKS) contributes to the ATP binding site.

This sequence belongs to the DNA mismatch repair MutS family.

In terms of biological role, this protein is involved in the repair of mismatches in DNA. It is possible that it carries out the mismatch recognition step. This protein has a weak ATPase activity. The polypeptide is DNA mismatch repair protein MutS (Lactobacillus delbrueckii subsp. bulgaricus (strain ATCC 11842 / DSM 20081 / BCRC 10696 / JCM 1002 / NBRC 13953 / NCIMB 11778 / NCTC 12712 / WDCM 00102 / Lb 14)).